The following is a 350-amino-acid chain: Melatonin receptor type 1A (350 aa).

The Extracellular segment spans residues 1-29; sequence MQGNGSALPNASQPVLRGDGARPSWLASA. 2 N-linked (GlcNAc...) asparagine glycosylation sites follow: Asn-4 and Asn-10. The chain crosses the membrane as a helical span at residues 30–50; that stretch reads LACVLIFTIVVDILGNLLVIL. Over 51-63 the chain is Cytoplasmic; sequence SVYRNKKLRNAGN. A helical membrane pass occupies residues 64-84; that stretch reads IFVVSLAVADLVVAIYPYPLV. The Extracellular portion of the chain corresponds to 85–102; that stretch reads LMSIFNNGWNLGYLHCQV. The cysteines at positions 100 and 177 are disulfide-linked. A helical transmembrane segment spans residues 103–123; sequence SGFLMGLSVIGSIFNITGIAI. Over 124–142 the chain is Cytoplasmic; that stretch reads NRYCYICHSLKYDKLYSSK. Residues 143–163 form a helical membrane-spanning segment; that stretch reads NSLCYVLLIWLLTLAAVLPNL. Residues Asn-162 and Gln-181 each contribute to the melatonin site. Topologically, residues 164–187 are extracellular; that stretch reads RAGTLQYDPRIYSCTFAQSVSSAY. The chain crosses the membrane as a helical span at residues 188-208; sequence TIAVVVFHFLVPMIIVIFCYL. Topologically, residues 209 to 240 are cytoplasmic; it reads RIWILVLQVRQRVKPDRKPKLKPQDFRNFVTM. A helical transmembrane segment spans residues 241 to 261; sequence FVVFVLFAICWAPLNFIGLAV. At 262 to 274 the chain is on the extracellular side; the sequence is ASDPASMVPRIPE. A helical membrane pass occupies residues 275 to 295; that stretch reads WLFVASYYMAYFNSCLNAIIY. The Cytoplasmic segment spans residues 296 to 350; the sequence is GLLNQNFRKEYRRIIVSLCTARVFFVDSSNDVADRVKWKPSPLMTNNNVVKVDSV.

Belongs to the G-protein coupled receptor 1 family. In terms of tissue distribution, expressed in hypophyseal pars tuberalis and hypothalamic suprachiasmatic nuclei (SCN). Hippocampus.

The protein localises to the cell membrane. Its function is as follows. High affinity receptor for melatonin. Likely to mediate the reproductive and circadian actions of melatonin. The activity of this receptor is mediated by pertussis toxin sensitive G proteins that inhibit adenylate cyclase activity. Possibly involved in sleep induction, by melatonin activation of the potassium channel KCNMA1/BK and the dissociation of G-beta and G-gamma subunits, thereby decreasing synaptic transmission. The sequence is that of Melatonin receptor type 1A (MTNR1A) from Homo sapiens (Human).